The sequence spans 161 residues: uncharacterized protein (161 aa).

The segment at residues 1–23 (MKKFAFLTALFAACYLPNAYAHA) is a signal peptide (or 21). A helical transmembrane segment spans residues 129–149 (IYLHDILGGIGYIVGIAGLIA).

Its subcellular location is the membrane. This is an uncharacterized protein from Haemophilus influenzae (strain ATCC 51907 / DSM 11121 / KW20 / Rd).